Reading from the N-terminus, the 273-residue chain is Pantothenate synthetase (273 aa).

Position 27-34 (27-34) interacts with ATP; sequence MGALHAGH. Residue His-34 is the Proton donor of the active site. Gln-58 is a (R)-pantoate binding site. Position 58 (Gln-58) interacts with beta-alanine. 144–147 provides a ligand contact to ATP; it reads GKKD. (R)-pantoate is bound at residue Gln-150. ATP contacts are provided by residues Val-173 and 181–184; that span reads LSSR.

It belongs to the pantothenate synthetase family. Homodimer.

Its subcellular location is the cytoplasm. It carries out the reaction (R)-pantoate + beta-alanine + ATP = (R)-pantothenate + AMP + diphosphate + H(+). Its pathway is cofactor biosynthesis; (R)-pantothenate biosynthesis; (R)-pantothenate from (R)-pantoate and beta-alanine: step 1/1. Functionally, catalyzes the condensation of pantoate with beta-alanine in an ATP-dependent reaction via a pantoyl-adenylate intermediate. In Campylobacter hominis (strain ATCC BAA-381 / DSM 21671 / CCUG 45161 / LMG 19568 / NCTC 13146 / CH001A), this protein is Pantothenate synthetase.